Reading from the N-terminus, the 156-residue chain is MQHSQVSPNARQQLAETVVLNKARLGLSWQDLADGTGLALTFVTAALLGQHALPEAAARKVAAQLGLDDDAVLLLQSIPLRGSIPGGIPSDPTIYRFYEMLQVYGSTLKALVHEQFGDGIISAINFKLDIKKVEDPEGGSRAVITLDGKYLPTKPF.

Catalysis depends on residues R96, E99, and S122.

It belongs to the cyanase family.

The catalysed reaction is cyanate + hydrogencarbonate + 3 H(+) = NH4(+) + 2 CO2. Its function is as follows. Catalyzes the reaction of cyanate with bicarbonate to produce ammonia and carbon dioxide. The sequence is that of Cyanate hydratase from Pseudomonas aeruginosa (strain LESB58).